A 273-amino-acid polypeptide reads, in one-letter code: Probable cysteine-rich repeat secretory protein 6 (273 aa).

The signal sequence occupies residues 1 to 21 (MTRIIDVSLFCFFLFSLGAMS). Gnk2-homologous domains lie at 22-122 (QPSQ…DNSF) and 128-241 (DSPA…ISAL).

Belongs to the cysteine-rich repeat secretory protein family.

The protein resides in the secreted. The sequence is that of Probable cysteine-rich repeat secretory protein 6 (CRRSP6) from Arabidopsis thaliana (Mouse-ear cress).